Here is a 357-residue protein sequence, read N- to C-terminus: mRNA export factor GLE2 (357 aa).

Residues 1–31 are disordered; that stretch reads MAGLFGTTTSTTTSTLGDLKNDVELGSPPED. WD repeat units follow at residues 28-71, 76-115, 117-158, 160-197, and 256-295; these read PPED…QNQG, EHEG…AMQV, AHDA…PAGT, QCQE…KFYK, and TNVH…RLKG.

It belongs to the WD repeat rae1 family. Component of the nuclear pore complex (NPC). NPC constitutes the exclusive means of nucleocytoplasmic transport. NPCs allow the passive diffusion of ions and small molecules and the active, nuclear transport receptor-mediated bidirectional transport of macromolecules such as proteins, RNAs, ribonucleoparticles (RNPs), and ribosomal subunits across the nuclear envelope. Due to its 8-fold rotational symmetry, all subunits are present with 8 copies or multiples thereof.

Its subcellular location is the nucleus. The protein localises to the nuclear pore complex. It localises to the nucleus membrane. Functions as a component of the nuclear pore complex (NPC). NPC components, collectively referred to as nucleoporins (NUPs), can play the role of both NPC structural components and of docking or interaction partners for transiently associated nuclear transport factors. It is specifically important for nuclear mRNA export. The chain is mRNA export factor GLE2 (GLE2) from Chaetomium thermophilum (strain DSM 1495 / CBS 144.50 / IMI 039719) (Thermochaetoides thermophila).